We begin with the raw amino-acid sequence, 730 residues long: ATP-binding cassette sub-family D member 1 (730 aa).

The next 4 helical transmembrane spans lie at 24 to 44 (AFSY…VTIP), 137 to 157 (FCLI…GALV), 169 to 189 (ALVL…NSMI), and 276 to 296 (ANII…AHIL). The ABC transmembrane type-1 domain maps to 136-373 (TFCLISRTFL…WFIMLEQFFM (238 aa)). In terms of domain architecture, ABC transporter spans 505-727 (ISLRAVPVVT…MNSDEEQKGQ (223 aa)). 538–545 (GPNGCGKS) contributes to the ATP binding site.

This sequence belongs to the ABC transporter superfamily. ABCD family. Peroxisomal fatty acyl CoA transporter (TC 3.A.1.203) subfamily.

The protein localises to the peroxisome membrane. It catalyses the reaction an acyl-CoA(out) + ATP + H2O = an acyl-CoA(in) + ADP + phosphate + H(+). In terms of biological role, plays a role in the transport of free very-long-chain fatty acids (VLCFAs) as well as their CoA-esters across the peroxisomal membrane by acting as an ATP-specific binding subunit releasing ADP after ATP hydrolysis. Thus, plays a role in regulation of VLCFAs and energy metabolism namely, in the degradation and biosynthesis of fatty acids by beta-oxidation, mitochondrial function and microsomal fatty acid elongation. The chain is ATP-binding cassette sub-family D member 1 from Drosophila melanogaster (Fruit fly).